A 383-amino-acid polypeptide reads, in one-letter code: Acetylornithine deacetylase (383 aa).

H80 lines the Zn(2+) pocket. The active site involves D82. Residue D112 participates in Zn(2+) binding. E144 is a catalytic residue. Zn(2+) contacts are provided by E145, E169, and H355.

It belongs to the peptidase M20A family. ArgE subfamily. Homodimer. The cofactor is Zn(2+). Requires Co(2+) as cofactor. It depends on glutathione as a cofactor.

The protein localises to the cytoplasm. It carries out the reaction N(2)-acetyl-L-ornithine + H2O = L-ornithine + acetate. Its pathway is amino-acid biosynthesis; L-arginine biosynthesis; L-ornithine from N(2)-acetyl-L-ornithine (linear): step 1/1. Functionally, catalyzes the hydrolysis of the amide bond of N(2)-acetylated L-amino acids. Cleaves the acetyl group from N-acetyl-L-ornithine to form L-ornithine, an intermediate in L-arginine biosynthesis pathway, and a branchpoint in the synthesis of polyamines. The polypeptide is Acetylornithine deacetylase (Salmonella typhimurium (strain LT2 / SGSC1412 / ATCC 700720)).